We begin with the raw amino-acid sequence, 233 residues long: MHIMEGYLPPMWCAVWWVLSGIVIAYGIVKLKKLLEESPEMKPLVAISGAYMFILSSLKMPSVTGSCSHPCGNGLGAVLFGVPITAVLAAIVLLFQALFLAHGGLTTLGANDFSMGIVGPAAAVIVYRLCMKAGLSSTVGIFFAALFGDWLTYVTTAVQLALAFPIPSFTAAFTKFIVIYAYTQVPLAIAEGILTVIIWDYIKKLRPDLLLKLGVVPEEELKPYLTPSPAGGE.

6 helical membrane passes run 9–29, 43–63, 75–95, 107–127, 138–158, and 177–197; these read PPMW…YGIV, PLVA…MPSV, LGAV…VLLF, TLGA…VIVY, TVGI…TTAV, and IVIY…LTVI.

This sequence belongs to the CbiM family. In terms of assembly, forms an energy-coupling factor (ECF) transporter complex composed of an ATP-binding protein (A component, CbiO), a transmembrane protein (T component, CbiQ) and 2 possible substrate-capture proteins (S components, CbiM and CbiN) of unknown stoichimetry.

The protein resides in the cell membrane. It functions in the pathway cofactor biosynthesis; adenosylcobalamin biosynthesis. Part of the energy-coupling factor (ECF) transporter complex CbiMNOQ involved in cobalt import. This is Putative cobalt transport protein CbiM from Methanocaldococcus jannaschii (strain ATCC 43067 / DSM 2661 / JAL-1 / JCM 10045 / NBRC 100440) (Methanococcus jannaschii).